Here is a 320-residue protein sequence, read N- to C-terminus: Protein PXR1 (320 aa).

Positions 1–11 (MGLAGPRKRTK) are enriched in basic residues. The disordered stretch occupies residues 1–24 (MGLAGPRKRTKISHDPNNTAWSRS). A compositionally biased stretch (polar residues) spans 15-24 (DPNNTAWSRS). The 55-residue stretch at 25 to 79 (TSGYGHKIMSAQGWTPGSFLGASNAAHADHFTAGSAGHIRVILKDDNLGLGAKLR) folds into the G-patch domain. The tract at residues 152-298 (GEEVQTPQIS…MGRQFTRGRH (147 aa)) is disordered. Positions 169–182 (KRPKKARKKEKRRA) are enriched in basic residues. Composition is skewed to basic and acidic residues over residues 203–214 (RKENKEKKKSSD), 243–256 (KDPE…HDDS), and 269–288 (QESR…EHRP).

It belongs to the PINX1 family.

It is found in the nucleus. It localises to the nucleolus. In terms of biological role, involved in rRNA-processing at A0, A1 and A2 sites and negatively regulates telomerase. This chain is Protein PXR1 (PXR1), found in Ajellomyces capsulatus (strain NAm1 / WU24) (Darling's disease fungus).